Reading from the N-terminus, the 156-residue chain is Protein CROC-4 (156 aa).

A disordered region spans residues 46–71 (RATSSTTDSSRAPSSPRPPGSTSHCG). Residues 48–59 (TSSTTDSSRAPS) show a composition bias toward low complexity.

Expressed throughout the brain in the thalamus, subthalamic nucleus, corpus callosum, hippocampus, substantia nigra, caudate nucleus, and amygdala.

The protein localises to the nucleus. Functionally, may play a role in FOS signaling pathways involved in development and remodeling of neurons. Promotes transcription of the FOS promoter. In Homo sapiens (Human), this protein is Protein CROC-4.